The sequence spans 351 residues: L-threonine 3-dehydrogenase (351 aa).

C42 lines the Zn(2+) pocket. Residues T44 and H47 each act as charge relay system in the active site. Zn(2+) contacts are provided by H67, E68, C97, C100, C103, and C111. Residues I179, D199, R204, 266–268 (LGL), and 291–292 (IT) each bind NAD(+).

It belongs to the zinc-containing alcohol dehydrogenase family. As to quaternary structure, homotetramer. Zn(2+) serves as cofactor.

Its subcellular location is the cytoplasm. The catalysed reaction is L-threonine + NAD(+) = (2S)-2-amino-3-oxobutanoate + NADH + H(+). It functions in the pathway amino-acid degradation; L-threonine degradation via oxydo-reductase pathway; glycine from L-threonine: step 1/2. Functionally, catalyzes the NAD(+)-dependent oxidation of L-threonine to 2-amino-3-ketobutyrate. In Symbiobacterium thermophilum (strain DSM 24528 / JCM 14929 / IAM 14863 / T), this protein is L-threonine 3-dehydrogenase.